The following is a 321-amino-acid chain: Nucleus-vacuole junction protein 1 (321 aa).

Positions 1 to 22 (MTRPPLVRGIFSLGLSVAVLKG) are cleaved as a signal peptide. The interval 73-125 (ELSWRKVFNFISRQSSELDTRIYVLILLLSFLLPIAWTVLDGDRETTLEDKDN) is TSC13-binding. The helical transmembrane segment at 94–114 (IYVLILLLSFLLPIAWTVLDG) threads the bilayer. The OSH1-binding stretch occupies residues 139–195 (KHYNDGERAVLQFGKNRSEPIILSYKDMNVLEGEHEFTSKEEHSNSHLTSKSENALN). 2 positions are modified to phosphoserine: Ser156 and Ser199. The disordered stretch occupies residues 211 to 275 (LEEDKNEPNG…SLKSSTSFPI (65 aa)). Residues 233–321 (DCSSSSEVES…EQAYSQPFRY (89 aa)) are VAC8-binding. Positions 242–262 (SQSKCRKESTAEPDSLSRDTR) are enriched in basic and acidic residues. A compositionally biased stretch (low complexity) spans 263–272 (TTSSLKSSTS). A phosphoserine mark is found at Ser285 and Ser298. Positions 299-321 (PTKSSNLDAQVNTEQAYSQPFRY) are disordered.

Interacts with OSH1, TSC13 and VAC8.

It is found in the nucleus outer membrane. In terms of biological role, involved in the formation of nucleus-vacuole junctions (NVJs) during piecemeal microautophagy of the nucleus (PMN). NVJs are interorganelle interfaces mediated by NVJ1 in the nuclear envelope and VAC8 on the vacuole membrane. Together, NVJ1 and VAC8 form Velcro-like patches through which teardrop-like portions of the nucleus are pinched off into the vacuolar lumen and degraded by the PMN process. Also acts as an outer-nuclear membrane receptor for OSH1 and TSC13. The protein is Nucleus-vacuole junction protein 1 (NVJ1) of Saccharomyces cerevisiae (strain ATCC 204508 / S288c) (Baker's yeast).